A 356-amino-acid chain; its full sequence is Tyrosine recombinase XerS (356 aa).

The region spanning I16–T121 is the Core-binding (CB) domain. Residues E169–D354 form the Tyr recombinase domain. Catalysis depends on residues R210, K234, H306, R309, and H332. Y341 serves as the catalytic O-(3'-phospho-DNA)-tyrosine intermediate.

This sequence belongs to the 'phage' integrase family. XerS subfamily.

The protein localises to the cytoplasm. Its activity is regulated as follows. FtsK is required for recombination. Site-specific tyrosine recombinase, which acts by catalyzing the cutting and rejoining of the recombining DNA molecules. Essential to convert dimers of the bacterial chromosome into monomers to permit their segregation at cell division. This is Tyrosine recombinase XerS from Streptococcus agalactiae serotype Ia (strain ATCC 27591 / A909 / CDC SS700).